Reading from the N-terminus, the 202-residue chain is Peptidyl-tRNA hydrolase (202 aa).

TRNA is bound at residue tyrosine 14. The active-site Proton acceptor is histidine 19. Residues tyrosine 64, asparagine 66, and asparagine 112 each coordinate tRNA.

Belongs to the PTH family. Monomer.

It localises to the cytoplasm. The enzyme catalyses an N-acyl-L-alpha-aminoacyl-tRNA + H2O = an N-acyl-L-amino acid + a tRNA + H(+). In terms of biological role, hydrolyzes ribosome-free peptidyl-tRNAs (with 1 or more amino acids incorporated), which drop off the ribosome during protein synthesis, or as a result of ribosome stalling. Catalyzes the release of premature peptidyl moieties from peptidyl-tRNA molecules trapped in stalled 50S ribosomal subunits, and thus maintains levels of free tRNAs and 50S ribosomes. In Xanthobacter autotrophicus (strain ATCC BAA-1158 / Py2), this protein is Peptidyl-tRNA hydrolase.